The sequence spans 127 residues: Large ribosomal subunit protein bL17 (127 aa).

The protein belongs to the bacterial ribosomal protein bL17 family. Part of the 50S ribosomal subunit. Contacts protein L32.

The polypeptide is Large ribosomal subunit protein bL17 (Lacticaseibacillus casei (strain BL23) (Lactobacillus casei)).